Consider the following 343-residue polypeptide: Heat-inducible transcription repressor HrcA (343 aa).

It belongs to the HrcA family.

In terms of biological role, negative regulator of class I heat shock genes (grpE-dnaK-dnaJ and groELS operons). Prevents heat-shock induction of these operons. This chain is Heat-inducible transcription repressor HrcA, found in Halalkalibacterium halodurans (strain ATCC BAA-125 / DSM 18197 / FERM 7344 / JCM 9153 / C-125) (Bacillus halodurans).